Reading from the N-terminus, the 1075-residue chain is Nuclear factor of activated T-cells, cytoplasmic 3 (1075 aa).

Thr-2 is modified (N-acetylthreonine). The segment at 18 to 37 (FGEDGAPAPPPPGSRPADLE) is disordered. The interval 109–114 (PSIQIT) is calcineurin-binding. The interval 205-306 (LGSPLTSPGG…PGHSPRGSVT (102 aa)) is disordered. 2 tandem repeats follow at residues 207 to 223 (SPLT…PGEE) and 236 to 252 (SPRQ…VTDE). The segment at 207 to 308 (SPLTSPGGSP…HSPRGSVTED (102 aa)) is 3 X SP repeats. Residues 236–253 (SPRQSPCHSPRSSVTDEN) are compositionally biased toward polar residues. Over residues 256–270 (SPRPASGPSSRPTSP) the composition is skewed to low complexity. A Nuclear localization signal motif is present at residues 273–275 (KRR). Residues 292–308 (SPVPSPGHSPRGSVTED) form repeat 3. Residues Ser-344 and Ser-372 each carry the phosphoserine modification. Residues 415-596 (SSLPPLDWPL…IPVECSQRSA (182 aa)) form the RHD domain. A DNA-binding region spans residues 444–451 (RAHYETEG). The Nuclear localization signal signature appears at 686–688 (KRK). Disordered regions lie at residues 711 to 739 (DLSS…SHDS) and 887 to 988 (SNTG…GLSA). Composition is skewed to polar residues over residues 724–739 (AQTQ…SHDS) and 887–912 (SNTG…QLQP). Composition is skewed to low complexity over residues 916 to 939 (GPSH…SSPL) and 949 to 967 (PMPY…SPAT). A compositionally biased stretch (polar residues) spans 970–981 (HSGQHSTQAQST). The Nuclear export signal motif lies at 1032 to 1041 (TLDDVNEIIG). Positions 1049 to 1075 (VSQGAGVSRQAPLPSPESLDLGRSDGL) are disordered. 2 positions are modified to phosphoserine: Ser-1063 and Ser-1066.

As to quaternary structure, NFATC proteins bind to DNA as monomers. Member of the multicomponent NFATC transcription complex that consists of at least two components, a pre-existing cytoplasmic component NFATC2 and an inducible nuclear component NFATC1. Other members such as NFATC4, or members of the activating protein-1 family, MAF, GATA4 and Cbp/p300 can also bind the complex. Component of a promoter-binding complex composed of STAT3, NFATC3 and NFATC4; complex formation is enhanced by calcineurin. Interacts with TRIM17; this interaction prevents NFATC3 nuclear localization. Interacts with and ubiquitinated by STUB1/CHIP; HSPA1A/HSP70 is required as a co-chaperone. Post-translationally, ubiquitinated by STUB1/CHIP, leading to proteasomal degradation. In terms of processing, phosphorylated by NFATC-kinase; dephosphorylated by calcineurin. As to expression, predominantly expressed in thymus and is also found in peripheral blood leukocytes and kidney. In terms of tissue distribution, predominantly expressed in skeletal muscle. Also found weakly expressed in the thymus, kidney, testis, spleen, prostate, ovary, small intestine, heart, placenta and pancreas. Expressed in thymus and kidney. As to expression, expressed in thymus and skeletal muscle.

The protein resides in the cytoplasm. It localises to the nucleus. Acts as a regulator of transcriptional activation. Binds to the TNFSF11/RANKL promoter region and promotes TNFSF11 transcription. Binding to the TNFSF11 promoter region is increased by high levels of Ca(2+) which induce NFATC3 expression and may lead to regulation of TNFSF11 expression in osteoblasts. Plays a role in promoting mesenteric arterial wall remodeling in response to the intermittent hypoxia-induced increase in EDN1 and ROCK signaling. As a result NFATC3 colocalizes with F-actin filaments, translocates to the nucleus and promotes transcription of the smooth muscle hypertrophy and differentiation marker ACTA2. Promotes lipopolysaccharide-induced apoptosis and hypertrophy in cardiomyocytes. Following JAK/STAT signaling activation and as part of a complex with NFATC4 and STAT3, binds to the alpha-beta E4 promoter region of CRYAB and activates transcription in cardiomyocytes. In conjunction with NFATC4, involved in embryonic heart development via maintenance of cardiomyocyte survival, proliferation and differentiation. Plays a role in the inducible expression of cytokine genes in T-cells, especially in the induction of the IL-2. Required for thymocyte maturation during DN3 to DN4 transition and during positive selection. Positively regulates macrophage-derived polymicrobial clearance, via binding to the promoter region and promoting transcription of NOS2 resulting in subsequent generation of nitric oxide. Involved in Ca(2+)-mediated transcriptional responses upon Ca(2+) influx via ORAI1 CRAC channels. The protein is Nuclear factor of activated T-cells, cytoplasmic 3 of Homo sapiens (Human).